The following is a 516-amino-acid chain: Apolipoprotein N-acyltransferase (516 aa).

The next 6 helical transmembrane spans lie at 24–44 (LAQAPFDLWPLALLSLALLYL), 58–78 (GWCYGFGLYAVGTSWIYISIH), 90–110 (LLTLALMLALAFFFALPAWLW), 125–145 (LAFAALWLALEGFRGWFLTGF), 163–183 (APLGGVWLLSFALALSAALLV), and 192–212 (PPALLGALVLLLAPWATGLAL). A CN hydrolase domain is found at 230-471 (VQGNVEQNLK…RAVLYGEVTP (242 aa)). Glu270 acts as the Proton acceptor in catalysis. The active site involves Lys331. Residue Cys383 is the Nucleophile of the active site. The helical transmembrane segment at 479 to 499 (LRWRAWPLAGLAVLLLGWALL) threads the bilayer.

It belongs to the CN hydrolase family. Apolipoprotein N-acyltransferase subfamily.

It localises to the cell inner membrane. The enzyme catalyses N-terminal S-1,2-diacyl-sn-glyceryl-L-cysteinyl-[lipoprotein] + a glycerophospholipid = N-acyl-S-1,2-diacyl-sn-glyceryl-L-cysteinyl-[lipoprotein] + a 2-acyl-sn-glycero-3-phospholipid + H(+). Its pathway is protein modification; lipoprotein biosynthesis (N-acyl transfer). Catalyzes the phospholipid dependent N-acylation of the N-terminal cysteine of apolipoprotein, the last step in lipoprotein maturation. This chain is Apolipoprotein N-acyltransferase, found in Azotobacter vinelandii (strain DJ / ATCC BAA-1303).